We begin with the raw amino-acid sequence, 189 residues long: Accessory gene regulator protein B (189 aa).

The next 5 membrane-spanning stretches (helical) occupy residues 49–69, 81–100, 110–130, 143–163, and 164–184; these read IAYILNIFLFTLITNLTFYLI, SFWCYVESIILFILLPLVIV, IILTVISLGVISVYAPAATKK, YYAIIVSLTLFIITLIIKEPF, and AQFIQLGIIIEAITLLPIFFI.

This sequence belongs to the AgrB family.

The protein localises to the cell membrane. In terms of biological role, essential for the production of a quorum sensing system signal molecule, the autoinducing peptide (AIP). This quorum sensing system is responsible for the regulation of the expression of virulence factor genes. Involved in the proteolytic processing of AgrD, the precursor of AIP. The protein is Accessory gene regulator protein B of Staphylococcus aureus (strain COL).